Consider the following 400-residue polypeptide: Zinc finger protein 514 (400 aa).

Residues 1–72 (MTFEDVAVEF…EREISTGAHS (72 aa)) form the KRAB domain. C2H2-type zinc fingers lie at residues 204–226 (CKCNECGKSFHFQSELRRHQRCH), 232–254 (YECSDCGRAFGHISSLIKHQRTH), 260–282 (YECSECGRAFSQSSSLVLHYRFH), 288–310 (YKCNECGRAFGHTSSLIKHQRTH), 316–338 (YECRECGRTFSQSSSLIVHYRFH), 344–366 (YKCNKCGRAFSQSSSLTQHYRFH), and 372–394 (YKCNECGRAFAHTASLIKHQRSH).

It belongs to the krueppel C2H2-type zinc-finger protein family.

It is found in the nucleus. Functionally, may be involved in transcriptional regulation. The protein is Zinc finger protein 514 (ZNF514) of Homo sapiens (Human).